The following is a 116-amino-acid chain: Transcription initiation factor IIA subunit 2 (116 aa).

The protein belongs to the TFIIA subunit 2 family. In terms of assembly, TFIIA is a heterodimer composed of the large TOA1 and the small TOA2 subunits.

The protein resides in the nucleus. Functionally, TFIIA is a component of the transcription machinery of RNA polymerase II and plays an important role in transcriptional activation. TFIIA in a complex with tbp mediates transcriptional activity. In Pyricularia oryzae (strain 70-15 / ATCC MYA-4617 / FGSC 8958) (Rice blast fungus), this protein is Transcription initiation factor IIA subunit 2 (TOA2).